Consider the following 186-residue polypeptide: Elongation factor P (186 aa).

Belongs to the elongation factor P family.

It localises to the cytoplasm. Its pathway is protein biosynthesis; polypeptide chain elongation. In terms of biological role, involved in peptide bond synthesis. Stimulates efficient translation and peptide-bond synthesis on native or reconstituted 70S ribosomes in vitro. Probably functions indirectly by altering the affinity of the ribosome for aminoacyl-tRNA, thus increasing their reactivity as acceptors for peptidyl transferase. The polypeptide is Elongation factor P (Enterococcus faecalis (strain ATCC 700802 / V583)).